We begin with the raw amino-acid sequence, 561 residues long: Glucose-6-phosphate isomerase (561 aa).

Glu366 (proton donor) is an active-site residue. Residues His397 and Lys525 contribute to the active site.

It belongs to the GPI family.

The protein localises to the cytoplasm. The enzyme catalyses alpha-D-glucose 6-phosphate = beta-D-fructose 6-phosphate. It functions in the pathway carbohydrate degradation; glycolysis; D-glyceraldehyde 3-phosphate and glycerone phosphate from D-glucose: step 2/4. In Dictyostelium discoideum (Social amoeba), this protein is Glucose-6-phosphate isomerase (gpi).